A 957-amino-acid chain; its full sequence is Glycine dehydrogenase (decarboxylating) (957 aa).

Lys708 is subject to N6-(pyridoxal phosphate)lysine.

Belongs to the GcvP family. The glycine cleavage system is composed of four proteins: P, T, L and H. Pyridoxal 5'-phosphate is required as a cofactor.

It carries out the reaction N(6)-[(R)-lipoyl]-L-lysyl-[glycine-cleavage complex H protein] + glycine + H(+) = N(6)-[(R)-S(8)-aminomethyldihydrolipoyl]-L-lysyl-[glycine-cleavage complex H protein] + CO2. In terms of biological role, the glycine cleavage system catalyzes the degradation of glycine. The P protein binds the alpha-amino group of glycine through its pyridoxal phosphate cofactor; CO(2) is released and the remaining methylamine moiety is then transferred to the lipoamide cofactor of the H protein. The sequence is that of Glycine dehydrogenase (decarboxylating) from Salmonella agona (strain SL483).